A 450-amino-acid polypeptide reads, in one-letter code: Phosphoglucosamine mutase (450 aa).

The active-site Phosphoserine intermediate is Ser103. 4 residues coordinate Mg(2+): Ser103, Asp243, Asp245, and Asp247. Ser103 is modified (phosphoserine).

It belongs to the phosphohexose mutase family. Mg(2+) is required as a cofactor. Activated by phosphorylation.

The catalysed reaction is alpha-D-glucosamine 1-phosphate = D-glucosamine 6-phosphate. In terms of biological role, catalyzes the conversion of glucosamine-6-phosphate to glucosamine-1-phosphate. The chain is Phosphoglucosamine mutase from Lactobacillus helveticus (strain DPC 4571).